Consider the following 606-residue polypeptide: DNA mismatch repair protein MutL (606 aa).

Residues 348 to 378 form a disordered region; that stretch reads QPHAQRPQAPWSAETSPFRPYPPAAGFSERP.

The protein belongs to the DNA mismatch repair MutL/HexB family.

In terms of biological role, this protein is involved in the repair of mismatches in DNA. It is required for dam-dependent methyl-directed DNA mismatch repair. May act as a 'molecular matchmaker', a protein that promotes the formation of a stable complex between two or more DNA-binding proteins in an ATP-dependent manner without itself being part of a final effector complex. The sequence is that of DNA mismatch repair protein MutL from Rhizobium etli (strain CIAT 652).